The following is a 474-amino-acid chain: 4-aminobutyrate aminotransferase (474 aa).

A compositionally biased stretch (polar residues) spans 1–13 (MSSTATVTESTHF). The segment at 1–31 (MSSTATVTESTHFFPNEPQGPSIKTETIPGP) is disordered. 142–143 (GS) contributes to the pyridoxal 5'-phosphate binding site. Arg199 contacts substrate. Lys333 carries the post-translational modification N6-(pyridoxal phosphate)lysine. Position 357 (Thr357) interacts with pyridoxal 5'-phosphate.

The protein belongs to the class-III pyridoxal-phosphate-dependent aminotransferase family. In terms of assembly, homodimer. Pyridoxal 5'-phosphate is required as a cofactor.

It localises to the cytoplasm. It catalyses the reaction 4-aminobutanoate + 2-oxoglutarate = succinate semialdehyde + L-glutamate. Its function is as follows. Required for the degradation of gamma-aminobutyric acid (GABA), which is important for utilization of GABA as nitrogen source. Deaminates GABA to succinate-semialdehyde, which in turn is converted to succinate by the succinate semialdehyde dehydrogenase. Cannot transaminate beta-alanine (BAL). In Schizosaccharomyces pombe (strain 972 / ATCC 24843) (Fission yeast), this protein is 4-aminobutyrate aminotransferase (uga1).